Here is a 308-residue protein sequence, read N- to C-terminus: GTPase Era (308 aa).

In terms of domain architecture, Era-type G spans 9–179 (RAGFVALIGE…RAWLGASLPE (171 aa)). Positions 17–24 (GEPNAGKS) are G1. GTP is bound at residue 17–24 (GEPNAGKS). The G2 stretch occupies residues 43–47 (QTTRA). Residues 64-67 (DTPG) form a G3 region. Residues 64-68 (DTPGL) and 129-132 (NKID) contribute to the GTP site. The interval 129-132 (NKID) is G4. Residues 158-160 (ISA) are G5. The KH type-2 domain maps to 210-287 (LHQELPYQLT…HLFLQVKVRP (78 aa)).

Belongs to the TRAFAC class TrmE-Era-EngA-EngB-Septin-like GTPase superfamily. Era GTPase family. In terms of assembly, monomer.

It localises to the cytoplasm. The protein localises to the cell inner membrane. An essential GTPase that binds both GDP and GTP, with rapid nucleotide exchange. Plays a role in 16S rRNA processing and 30S ribosomal subunit biogenesis and possibly also in cell cycle regulation and energy metabolism. This chain is GTPase Era, found in Dinoroseobacter shibae (strain DSM 16493 / NCIMB 14021 / DFL 12).